We begin with the raw amino-acid sequence, 381 residues long: Creatine kinase M-type (381 aa).

The Phosphagen kinase N-terminal domain maps to 11–98 (KLNYKPEEEY…FDPIIQDRHG (88 aa)). A Phosphagen kinase C-terminal domain is found at 125–367 (YVLSSRVRTG…KLMVEMEKKL (243 aa)). 128-132 (SSRVR) lines the ATP pocket. Ser-164 bears the Phosphoserine mark. The residue at position 166 (Thr-166) is a Phosphothreonine. At Ser-178 the chain carries Phosphoserine. Phosphothreonine is present on Thr-180. ATP is bound at residue His-191. The residue at position 199 (Ser-199) is a Phosphoserine. The ATP site is built by Arg-236 and Arg-292. A phosphothreonine mark is found at Thr-313 and Thr-322. ATP contacts are provided by residues 320–325 (RGTGGV) and Asp-335. At Ser-372 the chain carries Phosphoserine.

The protein belongs to the ATP:guanido phosphotransferase family. Dimer of identical or non-identical chains, which can be either B (brain type) or M (muscle type). With MM being the major form in skeletal muscle and myocardium, MB existing in myocardium, and BB existing in many tissues, especially brain.

Its subcellular location is the cytoplasm. It carries out the reaction creatine + ATP = N-phosphocreatine + ADP + H(+). Its function is as follows. Reversibly catalyzes the transfer of phosphate between ATP and various phosphogens (e.g. creatine phosphate). Creatine kinase isoenzymes play a central role in energy transduction in tissues with large, fluctuating energy demands, such as skeletal muscle, heart, brain and spermatozoa. This Canis lupus familiaris (Dog) protein is Creatine kinase M-type (CKM).